Here is a 128-residue protein sequence, read N- to C-terminus: Glycine cleavage system H protein (128 aa).

Residues 24 to 106 enclose the Lipoyl-binding domain; the sequence is VATVGITAFA…YNNGWLLKIK (83 aa). At lysine 65 the chain carries N6-lipoyllysine.

The protein belongs to the GcvH family. As to quaternary structure, the glycine cleavage system is composed of four proteins: P, T, L and H. (R)-lipoate serves as cofactor.

The glycine cleavage system catalyzes the degradation of glycine. The H protein shuttles the methylamine group of glycine from the P protein to the T protein. In Acaryochloris marina (strain MBIC 11017), this protein is Glycine cleavage system H protein.